An 80-amino-acid chain; its full sequence is APTEADATWVDLYNRVMIHQPASSYYAAEMHNEAKTDNPEEVLDLDRDVFMSAAYGIVDTVWYVQAELVNGRGGAVVAGL.

His19 is a catalytic residue.

It belongs to the peptidase S14 family. In terms of assembly, component of the chloroplastic Clp protease core complex.

It localises to the plastid. It is found in the chloroplast. The enzyme catalyses Hydrolysis of proteins to small peptides in the presence of ATP and magnesium. alpha-casein is the usual test substrate. In the absence of ATP, only oligopeptides shorter than five residues are hydrolyzed (such as succinyl-Leu-Tyr-|-NHMec, and Leu-Tyr-Leu-|-Tyr-Trp, in which cleavage of the -Tyr-|-Leu- and -Tyr-|-Trp bonds also occurs).. Its function is as follows. Cleaves peptides in various proteins in a process that requires ATP hydrolysis. Has a chymotrypsin-like activity. Plays a major role in the degradation of misfolded proteins. The polypeptide is Putative ATP-dependent Clp protease proteolytic subunit (Pinus strobus (Eastern white pine)).